The chain runs to 40 residues: Alpha-conotoxin-like Qc1.4b (40 aa).

A propeptide spanning residues 1–19 (SDGRNTAANDKASDLMALR) is cleaved from the precursor. 2 disulfides stabilise this stretch: cysteine 22-cysteine 28 and cysteine 23-cysteine 36. A lacks the Ser-Xaa-Pro motif that is crucial for potent interaction with nAChR region spans residues 24 to 26 (PNP). The residue at position 36 (cysteine 36) is a Cysteine amide. The propeptide occupies 37 to 40 (GGGR).

It belongs to the conotoxin A superfamily. As to expression, expressed by the venom duct.

It is found in the secreted. In terms of biological role, alpha-conotoxins act on postsynaptic membranes, they bind to the nicotinic acetylcholine receptors (nAChR) and thus inhibit them. Has possibly a distinct nAChR binding mode from other alpha-conotoxins, due to a different three residue motif (lacks the Ser-Xaa-Pro motif). The protein is Alpha-conotoxin-like Qc1.4b of Conus quercinus (Oak cone).